The following is a 686-amino-acid chain: tRNA wybutosine-synthesizing protein 4 (686 aa).

Residues Met1 to Ala10 are compositionally biased toward basic and acidic residues. Residues Met1 to Ala21 are disordered. S-adenosyl-L-methionine contacts are provided by residues Arg59, Gly89, Asp114, Asp161 to Leu162, and Glu188.

It belongs to the methyltransferase superfamily. LCMT family. Interacts with RNF144B/IBRDC2.

The enzyme catalyses 7-[(3S)-3-amino-3-carboxypropyl]wyosine(37) in tRNA(Phe) + S-adenosyl-L-methionine = 7-[(3S)-(3-amino-3-methoxycarbonyl)propyl]wyosine(37) in tRNA(Phe) + S-adenosyl-L-homocysteine. The catalysed reaction is 7-[(3S)-(3-amino-3-methoxycarbonyl)propyl]wyosine(37) in tRNA(Phe) + S-adenosyl-L-methionine + CO2 = wybutosine(37) in tRNA(Phe) + S-adenosyl-L-homocysteine + 2 H(+). It participates in tRNA modification; wybutosine-tRNA(Phe) biosynthesis. Probable S-adenosyl-L-methionine-dependent methyltransferase that acts as a component of the wybutosine biosynthesis pathway. Wybutosine is a hyper modified guanosine with a tricyclic base found at the 3'-position adjacent to the anticodon of eukaryotic phenylalanine tRNA. May methylate the carboxyl group of leucine residues to form alpha-leucine ester residues. This chain is tRNA wybutosine-synthesizing protein 4 (LCMT2), found in Homo sapiens (Human).